Here is a 66-residue protein sequence, read N- to C-terminus: Phylloseptin-H5 (66 aa).

Positions 1-22 (MAFLKKSLFLVLFLGLVSLSIC) are cleaved as a signal peptide. The propeptide occupies 23 to 44 (EEEKRETEEEENEQEDDDKSEE). Positions 24–44 (EEKRETEEEENEQEDDDKSEE) are disordered. Residues 30 to 41 (EEEENEQEDDDK) show a composition bias toward acidic residues. Position 65 is a phenylalanine amide (Phe-65).

As to expression, expressed by the skin glands.

The protein resides in the secreted. In terms of biological role, has antibacterial activity against the Gram-negative bacteria E.coli and P.aeruginosa, and the Gram-positive bacterium S.aureus. No hemolytic activity. The protein is Phylloseptin-H5 (psn7) of Pithecopus hypochondrialis (Orange-legged leaf frog).